A 427-amino-acid chain; its full sequence is MWRFFYTSLLLICQPLILCFIGLLSVKSPRYRQRLAERYGFYGNASCPPPQGIFIHAASVGEVIAATPLVRQLQQDYPHLSITFTTFTPTGSERVKATFGDSVFHYYLPLDLPFSIHRFINFVQPKLCIVMETELWPNLIHQLFLRNIPFVIANARLSARSAHRYGKIKAHLQTMWSQISLIAAQDNISGKRYATLGYPKEKLNITGNIKYDLNTNDELLRKIDSLRTLWKQDRPIWIAASTHNGEDEIILKSHRALLAKYPNLLLLLVPRHPERFNVVADLLKKEKFQFIRRSTNELPNENTQVILGDSMGELMLMYGISDIAFVGGSLVKHGGHNPLEPLAFKMPVITGKHTFNFPEIFRMLVEVQGVLEVNSTADALERAVEALLNSKESRERLGNAGYEVLMENRGALQRLLDLLKPYLERNV.

The chain crosses the membrane as a helical; Signal-anchor span at residues 4–24; sequence FFYTSLLLICQPLILCFIGLL. Glu62 (proton acceptor) is an active-site residue. Residues 270–271, 311–313, and 337–340 each bind CMP; these read PR, MGE, and NPLE.

The protein belongs to the glycosyltransferase group 1 family. Glycosyltransferase 30 subfamily.

Its subcellular location is the cell inner membrane. The enzyme catalyses lipid IVA (E. coli) + CMP-3-deoxy-beta-D-manno-octulosonate = alpha-Kdo-(2-&gt;6)-lipid IVA (E. coli) + CMP + H(+). The protein operates within bacterial outer membrane biogenesis; LPS core biosynthesis. In terms of biological role, involved in lipopolysaccharide (LPS) biosynthesis. Catalyzes the transfer of a single 3-deoxy-D-manno-octulosonate (Kdo) residue from CMP-Kdo to lipid IV(A), the tetraacyldisaccharide-1,4'-bisphosphate precursor of lipid A. Is strictly monofunctional, i.e. is capable of adding only a single Kdo residue to the acceptor lipid. This is 3-deoxy-D-manno-octulosonic acid transferase (waaA) from Haemophilus influenzae (strain ATCC 51907 / DSM 11121 / KW20 / Rd).